The primary structure comprises 338 residues: Glycerol-3-phosphate dehydrogenase [NAD(P)+] (338 aa).

Ser13, Trp14, and Lys108 together coordinate NADPH. The sn-glycerol 3-phosphate site is built by Lys108, Gly139, and Ser141. Ala143 lines the NADPH pocket. Sn-glycerol 3-phosphate contacts are provided by Lys194, Asp247, Ser257, Arg258, and Asn259. Residue Lys194 is the Proton acceptor of the active site. Arg258 contributes to the NADPH binding site. NADPH contacts are provided by Val282 and Glu284.

Belongs to the NAD-dependent glycerol-3-phosphate dehydrogenase family.

Its subcellular location is the cytoplasm. It carries out the reaction sn-glycerol 3-phosphate + NAD(+) = dihydroxyacetone phosphate + NADH + H(+). The enzyme catalyses sn-glycerol 3-phosphate + NADP(+) = dihydroxyacetone phosphate + NADPH + H(+). Its pathway is membrane lipid metabolism; glycerophospholipid metabolism. In terms of biological role, catalyzes the reduction of the glycolytic intermediate dihydroxyacetone phosphate (DHAP) to sn-glycerol 3-phosphate (G3P), the key precursor for phospholipid synthesis. This chain is Glycerol-3-phosphate dehydrogenase [NAD(P)+], found in Streptococcus pyogenes serotype M28 (strain MGAS6180).